A 324-amino-acid chain; its full sequence is Phospho-N-acetylmuramoyl-pentapeptide-transferase (324 aa).

9 helical membrane-spanning segments follow: residues 13-33, 59-79, 85-105, 121-141, 143-163, 179-199, 201-221, 243-263, and 303-323; these read VLSALLMGFAFSMVLGPIFIP, PTMGGLIFFISVTVTMLIIGY, GMVVLYSLIAFGIIGFLDDIL, MILLLLFSIALAYYGYTNIGT, IIIPFMNSKLNLGIFYIPLVV, IDGLASSVTVIVLTFFAIVGF, TGHYQVGVFSIALAGALLGFL, AIATIALILKMPLFIIIVGGI, and VKLVTVFSIITLILCIIGFIA.

Belongs to the glycosyltransferase 4 family. MraY subfamily. Requires Mg(2+) as cofactor.

The protein resides in the cell membrane. The catalysed reaction is UDP-N-acetyl-alpha-D-muramoyl-L-alanyl-gamma-D-glutamyl-meso-2,6-diaminopimeloyl-D-alanyl-D-alanine + di-trans,octa-cis-undecaprenyl phosphate = di-trans,octa-cis-undecaprenyl diphospho-N-acetyl-alpha-D-muramoyl-L-alanyl-D-glutamyl-meso-2,6-diaminopimeloyl-D-alanyl-D-alanine + UMP. It participates in cell wall biogenesis; peptidoglycan biosynthesis. Functionally, catalyzes the initial step of the lipid cycle reactions in the biosynthesis of the cell wall peptidoglycan: transfers peptidoglycan precursor phospho-MurNAc-pentapeptide from UDP-MurNAc-pentapeptide onto the lipid carrier undecaprenyl phosphate, yielding undecaprenyl-pyrophosphoryl-MurNAc-pentapeptide, known as lipid I. This is Phospho-N-acetylmuramoyl-pentapeptide-transferase from Clostridium botulinum (strain Alaska E43 / Type E3).